A 416-amino-acid polypeptide reads, in one-letter code: 4-hydroxy-3-methylbut-2-en-1-yl diphosphate synthase (flavodoxin) (416 aa).

[4Fe-4S] cluster-binding residues include Cys304, Cys307, Cys350, and Glu357.

It belongs to the IspG family. [4Fe-4S] cluster is required as a cofactor.

It catalyses the reaction (2E)-4-hydroxy-3-methylbut-2-enyl diphosphate + oxidized [flavodoxin] + H2O + 2 H(+) = 2-C-methyl-D-erythritol 2,4-cyclic diphosphate + reduced [flavodoxin]. It functions in the pathway isoprenoid biosynthesis; isopentenyl diphosphate biosynthesis via DXP pathway; isopentenyl diphosphate from 1-deoxy-D-xylulose 5-phosphate: step 5/6. Functionally, converts 2C-methyl-D-erythritol 2,4-cyclodiphosphate (ME-2,4cPP) into 1-hydroxy-2-methyl-2-(E)-butenyl 4-diphosphate. This Agrobacterium fabrum (strain C58 / ATCC 33970) (Agrobacterium tumefaciens (strain C58)) protein is 4-hydroxy-3-methylbut-2-en-1-yl diphosphate synthase (flavodoxin).